We begin with the raw amino-acid sequence, 174 residues long: RNA pyrophosphohydrolase (174 aa).

The region spanning Gly-6–Lys-149 is the Nudix hydrolase domain. Positions Gly-38–Gly-59 match the Nudix box motif.

The protein belongs to the Nudix hydrolase family. RppH subfamily. Requires a divalent metal cation as cofactor.

Its function is as follows. Accelerates the degradation of transcripts by removing pyrophosphate from the 5'-end of triphosphorylated RNA, leading to a more labile monophosphorylated state that can stimulate subsequent ribonuclease cleavage. This Neisseria meningitidis serogroup C (strain 053442) protein is RNA pyrophosphohydrolase.